The primary structure comprises 94 residues: Dynein light chain, cytoplasmic (94 aa).

The protein belongs to the dynein light chain family. As to quaternary structure, homodimer. Cytoplasmic dynein consists of two catalytic heavy chains (HCs) and a number of non-catalytic subunits which present intermediate chains (ICs), light intermediate chains (LICs) and light chains (LCs). Component of the nuclear pore complex (NPC). The nuclear pore complex constitutes the exclusive means of nucleocytoplasmic transport. NPCs allow the passive diffusion of ions and small molecules and the active, nuclear transport receptor-mediated bidirectional transport of macromolecules such as proteins, RNAs, ribonucleoparticles (RNPs), and ribosomal subunits across the nuclear envelope. Due to its 8-fold rotational symmetry, all subunits are present with 8 copies or multiples thereof.

The protein resides in the cytoplasm. It is found in the cytoskeleton. It localises to the nucleus. The protein localises to the nuclear pore complex. Acts as one of several non-catalytic accessory components of the cytoplasmic dynein complex that are thought to be involved in linking dynein to cargos and to adapter proteins that regulate dynein function. Cytoplasmic dynein 1 acts as a motor for the intracellular retrograde motility of vesicles and organelles along microtubules. May play a role in changing or maintaining the spatial distribution of cytoskeletal structures. Also a component of the nuclear pore complex. This is Dynein light chain, cytoplasmic (nudG) from Emericella nidulans (strain FGSC A4 / ATCC 38163 / CBS 112.46 / NRRL 194 / M139) (Aspergillus nidulans).